Here is a 345-residue protein sequence, read N- to C-terminus: N-acetyl-gamma-glutamyl-phosphate reductase (345 aa).

The active site involves C149.

Belongs to the NAGSA dehydrogenase family. Type 1 subfamily.

The protein localises to the cytoplasm. The catalysed reaction is N-acetyl-L-glutamate 5-semialdehyde + phosphate + NADP(+) = N-acetyl-L-glutamyl 5-phosphate + NADPH + H(+). It participates in amino-acid biosynthesis; L-arginine biosynthesis; N(2)-acetyl-L-ornithine from L-glutamate: step 3/4. Its function is as follows. Catalyzes the NADPH-dependent reduction of N-acetyl-5-glutamyl phosphate to yield N-acetyl-L-glutamate 5-semialdehyde. The chain is N-acetyl-gamma-glutamyl-phosphate reductase from Herminiimonas arsenicoxydans.